The chain runs to 376 residues: Probable low-specificity L-threonine aldolase (376 aa).

Positions 1-21 are enriched in polar residues; it reads MSGSVTSTTTETRLCPSNQGS. Positions 1-22 are disordered; sequence MSGSVTSTTTETRLCPSNQGSA. An N6-(pyridoxal phosphate)lysine modification is found at Lys-226.

This sequence belongs to the threonine aldolase family. In terms of assembly, homotetramer. Pyridoxal 5'-phosphate is required as a cofactor.

It catalyses the reaction L-threonine = acetaldehyde + glycine. The catalysed reaction is L-allo-threonine = acetaldehyde + glycine. It functions in the pathway amino-acid degradation; L-threonine degradation via aldolase pathway; acetaldehyde and glycine from L-threonine: step 1/1. This is Probable low-specificity L-threonine aldolase (gly1) from Schizosaccharomyces pombe (strain 972 / ATCC 24843) (Fission yeast).